Here is a 206-residue protein sequence, read N- to C-terminus: Superoxide dismutase [Mn] (206 aa).

Residues H27, H82, D168, and H172 each contribute to the Mn(2+) site.

It belongs to the iron/manganese superoxide dismutase family. As to quaternary structure, homodimer. Requires Mn(2+) as cofactor.

It catalyses the reaction 2 superoxide + 2 H(+) = H2O2 + O2. In terms of biological role, destroys superoxide anion radicals which are normally produced within the cells and which are toxic to biological systems. The chain is Superoxide dismutase [Mn] (sodA) from Salmonella typhi.